The sequence spans 291 residues: 4-diphosphocytidyl-2-C-methyl-D-erythritol kinase (291 aa).

Lysine 11 is an active-site residue. 95–105 (PVAAGLAGGSS) provides a ligand contact to ATP. The active site involves aspartate 137.

It belongs to the GHMP kinase family. IspE subfamily.

It carries out the reaction 4-CDP-2-C-methyl-D-erythritol + ATP = 4-CDP-2-C-methyl-D-erythritol 2-phosphate + ADP + H(+). It functions in the pathway isoprenoid biosynthesis; isopentenyl diphosphate biosynthesis via DXP pathway; isopentenyl diphosphate from 1-deoxy-D-xylulose 5-phosphate: step 3/6. Catalyzes the phosphorylation of the position 2 hydroxy group of 4-diphosphocytidyl-2C-methyl-D-erythritol. This is 4-diphosphocytidyl-2-C-methyl-D-erythritol kinase from Alkaliphilus metalliredigens (strain QYMF).